Consider the following 179-residue polypeptide: ATP-dependent protease subunit HslV (179 aa).

Thr-7 is a catalytic residue. 3 residues coordinate Na(+): Ala-163, Cys-166, and Thr-169.

This sequence belongs to the peptidase T1B family. HslV subfamily. As to quaternary structure, a double ring-shaped homohexamer of HslV is capped on each side by a ring-shaped HslU homohexamer. The assembly of the HslU/HslV complex is dependent on binding of ATP.

Its subcellular location is the cytoplasm. It catalyses the reaction ATP-dependent cleavage of peptide bonds with broad specificity.. Its activity is regulated as follows. Allosterically activated by HslU binding. In terms of biological role, protease subunit of a proteasome-like degradation complex believed to be a general protein degrading machinery. The sequence is that of ATP-dependent protease subunit HslV from Amoebophilus asiaticus (strain 5a2).